A 75-amino-acid polypeptide reads, in one-letter code: CLAVATA3/ESR (CLE)-related protein 2 (75 aa).

The N-terminal stretch at 1–22 (MAKLSFTFCFLLFLLLSSIAAG) is a signal peptide. The segment at 40-75 (PSIEATSPTVEDDQAAGSHGKSPERLSPGGPDPQHH) is disordered. Hydroxyproline is present on residues Pro67 and Pro70. Pro70 is a glycosylation site (O-linked (Ara...) hydroxyproline).

The protein belongs to the CLV3/ESR signal peptide family. In terms of assembly, interacts with the extracellular leucine-rich repeat region of CLV1. The O-glycosylation (arabinosylation) of the hydroxyproline Pro-70 enhances binding affinity of the CLE2p peptide for its receptor. Mostly expressed in roots and seedlings, and, to a lower extent, in apex.

The protein localises to the secreted. Its subcellular location is the extracellular space. Extracellular signal peptide that regulates cell fate. May act with CLV1 as a ligand-receptor pair in a signal transduction pathway, coordinating growth between adjacent meristematic regions. The chain is CLAVATA3/ESR (CLE)-related protein 2 from Arabidopsis thaliana (Mouse-ear cress).